The primary structure comprises 666 residues: DNA mismatch repair protein MutL (666 aa).

It belongs to the DNA mismatch repair MutL/HexB family.

In terms of biological role, this protein is involved in the repair of mismatches in DNA. It is required for dam-dependent methyl-directed DNA mismatch repair. May act as a 'molecular matchmaker', a protein that promotes the formation of a stable complex between two or more DNA-binding proteins in an ATP-dependent manner without itself being part of a final effector complex. In Clostridium botulinum (strain 657 / Type Ba4), this protein is DNA mismatch repair protein MutL.